A 471-amino-acid chain; its full sequence is tRNA(Ile)-lysidine synthase (471 aa).

ATP is bound at residue 27–32; sequence SGGPDS.

This sequence belongs to the tRNA(Ile)-lysidine synthase family.

It is found in the cytoplasm. It catalyses the reaction cytidine(34) in tRNA(Ile2) + L-lysine + ATP = lysidine(34) in tRNA(Ile2) + AMP + diphosphate + H(+). Its function is as follows. Ligates lysine onto the cytidine present at position 34 of the AUA codon-specific tRNA(Ile) that contains the anticodon CAU, in an ATP-dependent manner. Cytidine is converted to lysidine, thus changing the amino acid specificity of the tRNA from methionine to isoleucine. This is tRNA(Ile)-lysidine synthase from Dehalococcoides mccartyi (strain CBDB1).